The following is a 266-amino-acid chain: Putative [LysW]-aminoadipate/[LysW]-glutamate kinase (266 aa).

Residues 36 to 37, Arg63, and Asn168 each bind substrate; that span reads GG.

It belongs to the acetylglutamate kinase family. LysZ subfamily.

The protein localises to the cytoplasm. It carries out the reaction [amino-group carrier protein]-C-terminal-N-(1,4-dicarboxybutan-1-yl)-L-glutamine + ATP = [amino-group carrier protein]-C-terminal-N-(1-carboxy-5-phosphooxy-5-oxopentan-1-yl)-L-glutamine + ADP. The catalysed reaction is [amino-group carrier protein]-C-terminal-gamma-(L-glutamyl)-L-glutamate + ATP = [amino-group carrier protein]-C-terminal-gamma-(5-phospho-L-glutamyl)-L-glutamate + ADP. It functions in the pathway amino-acid biosynthesis; L-lysine biosynthesis via AAA pathway; L-lysine from L-alpha-aminoadipate (Thermus route): step 2/5. It participates in amino-acid biosynthesis; L-arginine biosynthesis. Functionally, involved in both the arginine and lysine biosynthetic pathways. Phosphorylates the LysW-bound precursors glutamate (for arginine biosynthesis), respectively alpha-aminoadipate (for lysine biosynthesis). The polypeptide is Putative [LysW]-aminoadipate/[LysW]-glutamate kinase (Cenarchaeum symbiosum (strain A)).